The sequence spans 1254 residues: Structural polyprotein (1254 aa).

The interval 43–77 (LQAQQMQQLISAVSALTTKQNVKAPKGQRKQKQQK) is host transcription inhibition. Residues 60–112 (TKQNVKAPKGQRKQKQQKPKEKKEKQKKKPTXKKKQQQKPKPQAKKKKPGRRE) form a disordered region. The Nuclear localization signal motif lies at 70-108 (QRKQKQQKPKEKKEKQKKKPTXKKKQQQKPKPQAKKKKP). Basic residues predominate over residues 84–110 (KQKKKPTXKKKQQQKPKPQAKKKKPGR). Residues 95-123 (QQQKPKPQAKKKKPGRRERMCMKIENDCI) are binding to the viral RNA. The interval 108 to 122 (PGRRERMCMKIENDC) is ribosome-binding. An intrachain disulfide couples cysteine 122 to cysteine 137. Residues 122–270 (CIFEVKLDGK…RVTPEGTEEW (149 aa)) enclose the Peptidase S3 domain. The Charge relay system role is filled by histidine 148. Positions 153–163 (IDNPDLAKLTY) match the Nuclear export signal motif. The segment at 164–169 (KKSSKY) is interaction with spike glycoprotein E2. Aspartate 170 serves as the catalytic Charge relay system. The interval 192-202 (PEGHYNWHHGA) is dimerization of the capsid protein. The active-site Charge relay system is the serine 222. Residues 228–232 (DNKGR) are dimerization of the capsid protein. Topologically, residues 270-694 (WSAALMMCIL…PHEIIQYYYG (425 aa)) are extracellular. The tract at residues 271–282 (SAALMMCILANT) is functions as an uncleaved signal peptide for the precursor of protein E3/E2. 3 disulfides stabilise this stretch: cysteine 277–cysteine 286, cysteine 291–cysteine 295, and cysteine 294–cysteine 326. The N-linked (GlcNAc...) asparagine; by host glycan is linked to asparagine 281. N-linked (GlcNAc...) asparagine; by host glycosylation occurs at asparagine 328. Cystine bridges form between cysteine 353–cysteine 459, cysteine 356–cysteine 362, cysteine 425–cysteine 439, cysteine 487–cysteine 599, cysteine 535–cysteine 559, and cysteine 537–cysteine 554. Interaction with host Mxra8 receptor stretches follow at residues 360 to 363 (YFCY) and 396 to 398 (HAH). Residues 518–521 (TAGN) form an interaction with host Mxra8 receptor region. Asparagine 534 carries an N-linked (GlcNAc...) asparagine; by host glycan. Positions 550 to 556 (TINTCKI) are interaction with host Mxra8 receptor. Asparagine 596 is a glycosylation site (N-linked (GlcNAc...) asparagine; by host). The chain crosses the membrane as a helical span at residues 695 to 715 (LYPAATIAAVSGASLMALLTL). Residues 716-756 (AATCCMLATARRKCLTPYALTPGAVVPLTLGLLXCAPRANA) are Cytoplasmic-facing. Cysteine 719 carries S-palmitoyl cysteine; by host lipidation. Residues 724–728 (TARRK) are interaction with the capsid protein. S-palmitoyl cysteine; by host attachment occurs at residues cysteine 729 and cysteine 750. Residues 729–749 (CLTPYALTPGAVVPLTLGLLX) are transient transmembrane before p62-6K protein processing. The cysteines at positions 729 and 750 are disulfide-linked. Residues 757–771 (ASFAETMAYLWDENK) lie on the Extracellular side of the membrane. Residues 772–792 (TLFWMEXXXXXXALALLACCI) traverse the membrane as a helical segment. A topological domain (cytoplasmic) is located at residue lysine 793. Residues 794 to 814 (SLICCCKPFSFLVLLSLGASA) traverse the membrane as a helical segment. At 815–1231 (KAYEHTATIP…AMTWVQRMAS (417 aa)) the chain is on the extracellular side. Cystine bridges form between cysteine 865-cysteine 930, cysteine 878-cysteine 910, cysteine 879-cysteine 912, and cysteine 884-cysteine 894. The tract at residues 900 to 917 (VYPFMWGGAYCFCDSENT) is E1 fusion peptide loop. A glycan (N-linked (GlcNAc...) asparagine; by host) is linked at asparagine 957. Intrachain disulfides connect cysteine 1075-cysteine 1087, cysteine 1117-cysteine 1192, cysteine 1122-cysteine 1196, and cysteine 1144-cysteine 1186. Residues 1232–1252 (GLGGLALIAVVVLVLVTCITM) traverse the membrane as a helical segment. The S-palmitoyl cysteine; by host moiety is linked to residue cysteine 1249. The S-stearoyl cysteine; by host moiety is linked to residue cysteine 1249. The Cytoplasmic segment spans residues 1253-1254 (RR).

In terms of assembly, homodimer. Homomultimer. Interacts with host karyopherin KPNA4; this interaction allows the nuclear import of the viral capsid protein. Interacts with spike glycoprotein E2. Interacts with host IRAK1; the interaction leads to inhibition of IRAK1-dependent signaling. As to quaternary structure, the precursor of protein E3/E2 and E1 form a heterodimer shortly after synthesis. The precursor of protein E3/E2 and E1 form a heterodimer shortly after synthesis. Processing of the precursor of protein E3/E2 into E2 and E3 results in a heterodimer of the spike glycoproteins E2 and E1. Spike at virion surface are constituted of a trimer of E2-E1 heterodimers. After target cell attachment and endocytosis, E1 change conformation to form homotrimers. Interacts with 6K protein. In terms of assembly, interacts with spike glycoprotein E1. Processing of the precursor of protein E3/E2 into E2 and E3 results in a heterodimer of the spike glycoproteins E2 and E1. Spike at virion surface are constituted of a trimer of E2-E1 heterodimers. Interacts with 6K protein. Interacts with host MXRA8; this interaction mediates virus entry. Post-translationally, structural polyprotein: Specific enzymatic cleavages in vivo yield mature proteins. Capsid protein is auto-cleaved during polyprotein translation, unmasking a signal peptide at the N-terminus of the precursor of E3/E2. The remaining polyprotein is then targeted to the host endoplasmic reticulum, where host signal peptidase cleaves it into pE2, 6K and E1 proteins. pE2 is further processed to mature E3 and E2 by host furin in trans-Golgi vesicle. In terms of processing, palmitoylated via thioester bonds. These palmitoylations may induce disruption of the C-terminus transmembrane. This would result in the reorientation of E2 C-terminus from lumenal to cytoplasmic side. N-glycosylated. Post-translationally, palmitoylated via thioester bonds.

The protein resides in the virion. Its subcellular location is the host cytoplasm. It is found in the host cell membrane. It localises to the host nucleus. The protein localises to the virion membrane. The protein resides in the host Golgi apparatus. Its subcellular location is the host trans-Golgi network. It is found in the host endoplasmic reticulum. The catalysed reaction is Autocatalytic release of the core protein from the N-terminus of the togavirus structural polyprotein by hydrolysis of a -Trp-|-Ser- bond.. In terms of biological role, forms an icosahedral capsid with a T=4 symmetry composed of 240 copies of the capsid protein surrounded by a lipid membrane through which penetrate 80 spikes composed of trimers of E1-E2 heterodimers. The capsid protein binds to the viral RNA genome at a site adjacent to a ribosome binding site for viral genome translation following genome release. Possesses a protease activity that results in its autocatalytic cleavage from the nascent structural protein. Following its self-cleavage, the capsid protein transiently associates with ribosomes, and within several minutes the protein binds to viral RNA and rapidly assembles into icosahedric core particles. The resulting nucleocapsid eventually associates with the cytoplasmic domain of the spike glycoprotein E2 at the cell membrane, leading to budding and formation of mature virions. In case of infection, new virions attach to target cells and after clathrin-mediated endocytosis their membrane fuses with the host endosomal membrane. This leads to the release of the nucleocapsid into the cytoplasm, followed by an uncoating event necessary for the genomic RNA to become accessible. The uncoating might be triggered by the interaction of capsid proteins with ribosomes. Binding of ribosomes would release the genomic RNA since the same region is genomic RNA-binding and ribosome-binding. Specifically inhibits interleukin-1 receptor-associated kinase 1/IRAK1-dependent signaling during viral entry, representing a means by which the alphaviruses may evade innate immune detection and activation prior to viral gene expression. Its function is as follows. Provides the signal sequence for the translocation of the precursor of protein E3/E2 to the host endoplasmic reticulum. Furin-cleaved E3 remains associated with spike glycoprotein E1 and mediates pH protection of the latter during the transport via the secretory pathway. After virion release from the host cell, the assembly protein E3 is gradually released in the extracellular space. Functionally, plays a role in viral attachment to target host cell, by binding to the cell receptor MXRA8. The host LDLR may also act as a cell receptor for viral entry. Synthesized as a p62 precursor which is processed by furin at the cell membrane just before virion budding, giving rise to E2-E1 heterodimer. The p62-E1 heterodimer is stable, whereas E2-E1 is unstable and dissociate at low pH. p62 is processed at the last step, presumably to avoid E1 fusion activation before its final export to cell surface. E2 C-terminus contains a transitory transmembrane that would be disrupted by palmitoylation, resulting in reorientation of the C-terminal tail from lumenal to cytoplasmic side. This step is critical since E2 C-terminus is involved in budding by interacting with capsid proteins. This release of E2 C-terminus in cytoplasm occurs lately in protein export, and precludes premature assembly of particles at the endoplasmic reticulum membrane. Acts as a viroporin that participates in virus glycoprotein processing and transport to the plasma membrane, cell permeabilization and budding of viral particles. The cation channel is permeable to Na(+)&gt;K(+)&gt;Ca(2+) in vitro. Disrupts the calcium homeostasis of the cell, probably at the endoplasmic reticulum level. This leads to cytoplasmic calcium elevation. Because of its lipophilic properties, the 6K protein is postulated to influence the selection of lipids that interact with the transmembrane domains of the glycoproteins, which, in turn, affects the deformability of the bilayer required for the extreme curvature that occurs as budding proceeds. Present in low amount in virions, about 3% compared to viral glycoproteins. In terms of biological role, class II viral fusion protein. Fusion activity is inactive as long as E1 is bound to E2 in mature virion. After virus attachment to target cell via host MXRA8 and endocytosis, acidification of the endosome induce dissociation of E1/E2 heterodimer and concomitant trimerization of the E1 subunits. This E1 trimer is fusion active, and promotes release of viral nucleocapsid in cytoplasm after endosome and viral membrane fusion. Efficient fusion requires the presence of cholesterol and sphingolipid in the target membrane. The chain is Structural polyprotein from Ross river virus (strain NB5092) (RRV).